Consider the following 329-residue polypeptide: Fructose-1,6-bisphosphatase class 1 2 (329 aa).

Mg(2+)-binding residues include glutamate 92, aspartate 111, leucine 113, and aspartate 114. Residues 114 to 117 (DGSS) and asparagine 206 contribute to the substrate site. Glutamate 278 serves as a coordination point for Mg(2+).

It belongs to the FBPase class 1 family. As to quaternary structure, homotetramer. The cofactor is Mg(2+).

It localises to the cytoplasm. The catalysed reaction is beta-D-fructose 1,6-bisphosphate + H2O = beta-D-fructose 6-phosphate + phosphate. It functions in the pathway carbohydrate biosynthesis; gluconeogenesis. The sequence is that of Fructose-1,6-bisphosphatase class 1 2 from Xanthobacter autotrophicus (strain ATCC BAA-1158 / Py2).